The following is a 387-amino-acid chain: MGLHNEPNTILICRYGELVLKGKNRLQFVKQLKKNVKQAFKKLSITNPVDYQFDMLVVGEVISTQRSLLKNLFTRLPGLSVCLFALQIPHDEAQLLALLQQVVQSHPSFKIEVRRRDKLFACNSSAFKKYLALQLWEKYQLKGKLVDPAITVHVEVTKEHFLIISESFNGIGGLPVFTSGTALALLSGGIDSPVAASLVLQRGFNVDFITFINEPGHNAATIGKIQRLANLVSLNQTLCTGRLFVFDFTDLQKELSHISLEGYRIVLMRRCFYKIASLFKYDCLITGEALGQVASQTIDNLKVIQAVVPNTFVIRPLIGLSKDKIIEWAKALGTFETSIEHHMDTCTVFAPKKPTTKAKLAIVEKLESELLFVRELIEAGVKKLQND.

The region spanning 67 to 167 (SLLKNLFTRL…KEHFLIISES (101 aa)) is the THUMP domain. ATP is bound by residues 185–186 (LL), 210–211 (TF), Arg-269, Gly-287, and Gln-296.

It belongs to the ThiI family.

The protein resides in the cytoplasm. The catalysed reaction is [ThiI sulfur-carrier protein]-S-sulfanyl-L-cysteine + a uridine in tRNA + 2 reduced [2Fe-2S]-[ferredoxin] + ATP + H(+) = [ThiI sulfur-carrier protein]-L-cysteine + a 4-thiouridine in tRNA + 2 oxidized [2Fe-2S]-[ferredoxin] + AMP + diphosphate. The enzyme catalyses [ThiS sulfur-carrier protein]-C-terminal Gly-Gly-AMP + S-sulfanyl-L-cysteinyl-[cysteine desulfurase] + AH2 = [ThiS sulfur-carrier protein]-C-terminal-Gly-aminoethanethioate + L-cysteinyl-[cysteine desulfurase] + A + AMP + 2 H(+). Its pathway is cofactor biosynthesis; thiamine diphosphate biosynthesis. Catalyzes the ATP-dependent transfer of a sulfur to tRNA to produce 4-thiouridine in position 8 of tRNAs, which functions as a near-UV photosensor. Also catalyzes the transfer of sulfur to the sulfur carrier protein ThiS, forming ThiS-thiocarboxylate. This is a step in the synthesis of thiazole, in the thiamine biosynthesis pathway. The sulfur is donated as persulfide by IscS. This Mycoplasma pneumoniae (strain ATCC 29342 / M129 / Subtype 1) (Mycoplasmoides pneumoniae) protein is Probable tRNA sulfurtransferase.